The sequence spans 119 residues: Large ribosomal subunit protein uL22 (119 aa).

This sequence belongs to the universal ribosomal protein uL22 family. As to quaternary structure, part of the 50S ribosomal subunit.

Functionally, this protein binds specifically to 23S rRNA; its binding is stimulated by other ribosomal proteins, e.g. L4, L17, and L20. It is important during the early stages of 50S assembly. It makes multiple contacts with different domains of the 23S rRNA in the assembled 50S subunit and ribosome. The globular domain of the protein is located near the polypeptide exit tunnel on the outside of the subunit, while an extended beta-hairpin is found that lines the wall of the exit tunnel in the center of the 70S ribosome. In Pelodictyon phaeoclathratiforme (strain DSM 5477 / BU-1), this protein is Large ribosomal subunit protein uL22.